A 409-amino-acid chain; its full sequence is Glycosyltransferase GtfE (409 aa).

Belongs to the glycosyltransferase 28 family.

Its pathway is antibiotic biosynthesis; vancomycin biosynthesis. In terms of biological role, D-glucosyltransferase that acts on the aglycone core, transferring D-glucose to the phenolic hydroxyl of OH-Phegly(4) to form a devancoaminyl-vancomycin (DVV) intermediate in the biosynthesis of glycopeptide antibiotic vancomycin. Also able to glycosylate A47934, an antibiotic with a teicoplanin-like heptapeptide, but lacking sugar residues. The polypeptide is Glycosyltransferase GtfE (gtfE) (Amycolatopsis orientalis (Nocardia orientalis)).